A 331-amino-acid chain; its full sequence is Phosphate acyltransferase (331 aa).

It belongs to the PlsX family. As to quaternary structure, homodimer. Probably interacts with PlsY.

The protein localises to the cytoplasm. The catalysed reaction is a fatty acyl-[ACP] + phosphate = an acyl phosphate + holo-[ACP]. It participates in lipid metabolism; phospholipid metabolism. In terms of biological role, catalyzes the reversible formation of acyl-phosphate (acyl-PO(4)) from acyl-[acyl-carrier-protein] (acyl-ACP). This enzyme utilizes acyl-ACP as fatty acyl donor, but not acyl-CoA. The polypeptide is Phosphate acyltransferase (Mesoplasma florum (strain ATCC 33453 / NBRC 100688 / NCTC 11704 / L1) (Acholeplasma florum)).